The sequence spans 435 residues: Methylenetetrahydrofolate--tRNA-(uracil-5-)-methyltransferase TrmFO (435 aa).

9–14 contributes to the FAD binding site; the sequence is GAGLAG.

Belongs to the MnmG family. TrmFO subfamily. It depends on FAD as a cofactor.

Its subcellular location is the cytoplasm. It carries out the reaction uridine(54) in tRNA + (6R)-5,10-methylene-5,6,7,8-tetrahydrofolate + NADH + H(+) = 5-methyluridine(54) in tRNA + (6S)-5,6,7,8-tetrahydrofolate + NAD(+). The enzyme catalyses uridine(54) in tRNA + (6R)-5,10-methylene-5,6,7,8-tetrahydrofolate + NADPH + H(+) = 5-methyluridine(54) in tRNA + (6S)-5,6,7,8-tetrahydrofolate + NADP(+). Its function is as follows. Catalyzes the folate-dependent formation of 5-methyl-uridine at position 54 (M-5-U54) in all tRNAs. This is Methylenetetrahydrofolate--tRNA-(uracil-5-)-methyltransferase TrmFO from Staphylococcus saprophyticus subsp. saprophyticus (strain ATCC 15305 / DSM 20229 / NCIMB 8711 / NCTC 7292 / S-41).